The primary structure comprises 260 residues: Hemin import ATP-binding protein HmuV (260 aa).

One can recognise an ABC transporter domain in the interval 3–239 (LHAQQISLSI…QRLSEVYGCD (237 aa)). 35–42 (GPNGSGKS) contributes to the ATP binding site.

It belongs to the ABC transporter superfamily. Heme (hemin) importer (TC 3.A.1.14.5) family. In terms of assembly, the complex is composed of two ATP-binding proteins (HmuV), two transmembrane proteins (HmuU) and a solute-binding protein (HmuT).

It localises to the cell inner membrane. In terms of biological role, part of the ABC transporter complex HmuTUV involved in hemin import. Responsible for energy coupling to the transport system. The sequence is that of Hemin import ATP-binding protein HmuV from Ruegeria sp. (strain TM1040) (Silicibacter sp.).